The primary structure comprises 352 residues: Protein-glutamate methylesterase/protein-glutamine glutaminase 1 (352 aa).

Residues 5-122 (KVLVVDDSAF…SLDVLSVKEE (118 aa)) enclose the Response regulatory domain. The residue at position 56 (D56) is a 4-aspartylphosphate. Residues 155-352 (PDQDRKLNKL…EITEEVLSML (198 aa)) form the CheB-type methylesterase domain. Active-site residues include S170, H197, and D297.

This sequence belongs to the CheB family. Post-translationally, phosphorylated by CheA. Phosphorylation of the N-terminal regulatory domain activates the methylesterase activity.

It is found in the cytoplasm. It carries out the reaction [protein]-L-glutamate 5-O-methyl ester + H2O = L-glutamyl-[protein] + methanol + H(+). The catalysed reaction is L-glutaminyl-[protein] + H2O = L-glutamyl-[protein] + NH4(+). Functionally, involved in chemotaxis. Part of a chemotaxis signal transduction system that modulates chemotaxis in response to various stimuli. Catalyzes the demethylation of specific methylglutamate residues introduced into the chemoreceptors (methyl-accepting chemotaxis proteins or MCP) by CheR. Also mediates the irreversible deamidation of specific glutamine residues to glutamic acid. The polypeptide is Protein-glutamate methylesterase/protein-glutamine glutaminase 1 (Syntrophomonas wolfei subsp. wolfei (strain DSM 2245B / Goettingen)).